We begin with the raw amino-acid sequence, 172 residues long: MSAQVSLELHLRISQFLFHEASLLDDWKFRDWLAQLDEEIRYTMRTTVNAQTRDRRKGVQPPTTWIFNDTKDQLERRIARLETGMAWAEEPPSRTRHLISNCQISETDIPNVFAVRVNYLLYQAQKERDETFYVGTRFDKVRRLEDDNWRLLERDIVLDQAVITSHNLSVLF.

It belongs to the bacterial ring-hydroxylating dioxygenase beta subunit family. As to quaternary structure, this dioxygenase system consists of four proteins: the two subunits of the hydroxylase component (HcaE and HcaF), a ferredoxin (HcaC) and a ferredoxin reductase (HcaD).

The enzyme catalyses 3-phenylpropanoate + NADH + O2 + H(+) = 3-(cis-5,6-dihydroxycyclohexa-1,3-dien-1-yl)propanoate + NAD(+). It catalyses the reaction (E)-cinnamate + NADH + O2 + H(+) = (2E)-3-(cis-5,6-dihydroxycyclohexa-1,3-dien-1-yl)prop-2-enoate + NAD(+). It participates in aromatic compound metabolism; 3-phenylpropanoate degradation. Its function is as follows. Part of the multicomponent 3-phenylpropionate dioxygenase. Converts 3-phenylpropionic acid (PP) and cinnamic acid (CI) into 3-phenylpropionate-dihydrodiol (PP-dihydrodiol) and cinnamic acid-dihydrodiol (CI-dihydrodiol), respectively. This is 3-phenylpropionate/cinnamic acid dioxygenase subunit beta from Shigella boydii serotype 4 (strain Sb227).